Reading from the N-terminus, the 286-residue chain is Translocon-associated protein subunit alpha (286 aa).

Residues Met1 to Leu21 form the signal peptide. The Lumenal segment spans residues Arg22–Thr207. A compositionally biased stretch (acidic residues) spans Ile46 to Ser75. A disordered region spans residues Ile46–Ala83. N-linked (GlcNAc...) asparagine glycosylation is found at Asn136 and Asn191. Residues Ile208–Leu228 traverse the membrane as a helical segment. Over Leu229–Glu286 the chain is Cytoplasmic. The disordered stretch occupies residues Arg236–Glu286. Residues Gly244–Lys266 are compositionally biased toward polar residues. The residue at position 247 (Ser247) is a Phosphoserine. Residue Thr260 is modified to Phosphothreonine. Ser268 is modified (phosphoserine). Over residues Ser268–Lys279 the composition is skewed to basic residues.

It belongs to the TRAP-alpha family. As to quaternary structure, heterotetramer of TRAP-alpha, TRAP-beta, TRAP-delta and TRAP-gamma. Interacts with palmitoylated calnexin (CALX), the interaction is required for efficient folding of glycosylated proteins.

Its subcellular location is the endoplasmic reticulum membrane. Functionally, TRAP proteins are part of a complex whose function is to bind calcium to the ER membrane and thereby regulate the retention of ER resident proteins. May be involved in the recycling of the translocation apparatus after completion of the translocation process or may function as a membrane-bound chaperone facilitating folding of translocated proteins. The sequence is that of Translocon-associated protein subunit alpha (Ssr1) from Mus musculus (Mouse).